Here is a 125-residue protein sequence, read N- to C-terminus: Protein ApaG (125 aa).

The region spanning 1 to 125 is the ApaG domain; sequence MINSPRVCIQ…FRLAVPTLIH (125 aa).

The sequence is that of Protein ApaG from Citrobacter koseri (strain ATCC BAA-895 / CDC 4225-83 / SGSC4696).